A 173-amino-acid polypeptide reads, in one-letter code: Crossover junction endodeoxyribonuclease RuvC (173 aa).

Active-site residues include aspartate 8, glutamate 67, and aspartate 139. Mg(2+)-binding residues include aspartate 8, glutamate 67, and aspartate 139.

It belongs to the RuvC family. As to quaternary structure, homodimer which binds Holliday junction (HJ) DNA. The HJ becomes 2-fold symmetrical on binding to RuvC with unstacked arms; it has a different conformation from HJ DNA in complex with RuvA. In the full resolvosome a probable DNA-RuvA(4)-RuvB(12)-RuvC(2) complex forms which resolves the HJ. Mg(2+) is required as a cofactor.

It localises to the cytoplasm. It carries out the reaction Endonucleolytic cleavage at a junction such as a reciprocal single-stranded crossover between two homologous DNA duplexes (Holliday junction).. Functionally, the RuvA-RuvB-RuvC complex processes Holliday junction (HJ) DNA during genetic recombination and DNA repair. Endonuclease that resolves HJ intermediates. Cleaves cruciform DNA by making single-stranded nicks across the HJ at symmetrical positions within the homologous arms, yielding a 5'-phosphate and a 3'-hydroxyl group; requires a central core of homology in the junction. The consensus cleavage sequence is 5'-(A/T)TT(C/G)-3'. Cleavage occurs on the 3'-side of the TT dinucleotide at the point of strand exchange. HJ branch migration catalyzed by RuvA-RuvB allows RuvC to scan DNA until it finds its consensus sequence, where it cleaves and resolves the cruciform DNA. This chain is Crossover junction endodeoxyribonuclease RuvC, found in Salmonella arizonae (strain ATCC BAA-731 / CDC346-86 / RSK2980).